We begin with the raw amino-acid sequence, 601 residues long: Elongation factor 4 (601 aa).

One can recognise a tr-type G domain in the interval 7-189 (KNIRNFSIVA…AIVTRLPPPQ (183 aa)). GTP contacts are provided by residues 19–24 (DHGKST) and 136–139 (NKID).

It belongs to the TRAFAC class translation factor GTPase superfamily. Classic translation factor GTPase family. LepA subfamily.

It localises to the cell inner membrane. It carries out the reaction GTP + H2O = GDP + phosphate + H(+). Functionally, required for accurate and efficient protein synthesis under certain stress conditions. May act as a fidelity factor of the translation reaction, by catalyzing a one-codon backward translocation of tRNAs on improperly translocated ribosomes. Back-translocation proceeds from a post-translocation (POST) complex to a pre-translocation (PRE) complex, thus giving elongation factor G a second chance to translocate the tRNAs correctly. Binds to ribosomes in a GTP-dependent manner. This chain is Elongation factor 4, found in Methylocella silvestris (strain DSM 15510 / CIP 108128 / LMG 27833 / NCIMB 13906 / BL2).